Reading from the N-terminus, the 184-residue chain is Large ribosomal subunit protein uL6 (184 aa).

Belongs to the universal ribosomal protein uL6 family. Part of the 50S ribosomal subunit.

In terms of biological role, this protein binds to the 23S rRNA, and is important in its secondary structure. It is located near the subunit interface in the base of the L7/L12 stalk, and near the tRNA binding site of the peptidyltransferase center. The polypeptide is Large ribosomal subunit protein uL6 (Thermococcus kodakarensis (strain ATCC BAA-918 / JCM 12380 / KOD1) (Pyrococcus kodakaraensis (strain KOD1))).